Consider the following 346-residue polypeptide: Pheromone receptor 2 (346 aa).

7 helical membrane-spanning segments follow: residues 8–28 (VSFGVLCLLAGCISTSSCLIH), 34–54 (IGVLLMMFWCFTGLVNKGINA), 71–94 (LSAIIERTWQFGLCCSALCVLQRL), 115–135 (LIDFGVGLGLPALQIPMFFIV), 160–180 (FIYHLWRLLVSLVCAVYAVLV), 219–239 (VLVSAGQFYVIIQSLQIGGLL), and 270–290 (LSILRWFSLTPAMALFVFFGL).

It belongs to the G-protein coupled receptor 4 family.

Its subcellular location is the membrane. Its function is as follows. Receptor for the A1 pheromone, a prenylated mating factor. This is Pheromone receptor 2 (PRA2) from Mycosarcoma maydis (Corn smut fungus).